We begin with the raw amino-acid sequence, 234 residues long: Sugar fermentation stimulation protein A (234 aa).

A DNA-binding region (H-T-H motif) is located at residues 201–220 (LLSEAQQRGVEILAYKAELS).

This sequence belongs to the SfsA family.

Functionally, binds to DNA non-specifically. Could be a regulatory factor involved in maltose metabolism. The protein is Sugar fermentation stimulation protein A of Escherichia coli (strain SMS-3-5 / SECEC).